Reading from the N-terminus, the 301-residue chain is ATP synthase gamma chain (301 aa).

This sequence belongs to the ATPase gamma chain family. In terms of assembly, F-type ATPases have 2 components, CF(1) - the catalytic core - and CF(0) - the membrane proton channel. CF(1) has five subunits: alpha(3), beta(3), gamma(1), delta(1), epsilon(1). CF(0) has three main subunits: a, b and c.

It localises to the cell inner membrane. Produces ATP from ADP in the presence of a proton gradient across the membrane. The gamma chain is believed to be important in regulating ATPase activity and the flow of protons through the CF(0) complex. This Helicobacter pylori (strain ATCC 700392 / 26695) (Campylobacter pylori) protein is ATP synthase gamma chain.